Here is a 35-residue protein sequence, read N- to C-terminus: Photosystem II reaction center protein T (35 aa).

The chain crosses the membrane as a helical span at residues 3-23; the sequence is AFAYTLLMTLVVATLFFAVAF.

This sequence belongs to the PsbT family. As to quaternary structure, PSII is composed of 1 copy each of membrane proteins PsbA, PsbB, PsbC, PsbD, PsbE, PsbF, PsbH, PsbI, PsbJ, PsbK, PsbL, PsbM, PsbT, PsbX, PsbY, Psb30/Ycf12, peripheral proteins PsbO, CyanoQ (PsbQ), PsbU, PsbV and a large number of cofactors. It forms dimeric complexes.

It localises to the cellular thylakoid membrane. Functionally, found at the monomer-monomer interface of the photosystem II (PS II) dimer, plays a role in assembly and dimerization of PSII. PSII is a light-driven water plastoquinone oxidoreductase, using light energy to abstract electrons from H(2)O, generating a proton gradient subsequently used for ATP formation. This Prochlorococcus marinus (strain MIT 9303) protein is Photosystem II reaction center protein T.